The primary structure comprises 72 residues: Sec-independent protein translocase protein TatA (72 aa).

Residues 1 to 21 (MLGGISIWQLLIVLAILVLIF) form a helical membrane-spanning segment.

This sequence belongs to the TatA/E family. In terms of assembly, the Tat system comprises two distinct complexes: a TatABC complex, containing multiple copies of TatA, TatB and TatC subunits, and a separate TatA complex, containing only TatA subunits. Substrates initially bind to the TatABC complex, which probably triggers association of the separate TatA complex to form the active translocon.

Its subcellular location is the cell inner membrane. Its function is as follows. Part of the twin-arginine translocation (Tat) system that transports large folded proteins containing a characteristic twin-arginine motif in their signal peptide across membranes. TatA could form the protein-conducting channel of the Tat system. The polypeptide is Sec-independent protein translocase protein TatA (Marinomonas sp. (strain MWYL1)).